The following is a 279-amino-acid chain: Putative biopolymer transport protein ExbB homolog (279 aa).

The next 3 membrane-spanning stretches (helical) occupy residues 19–39 (SGGV…ITAL), 126–146 (IIEV…WYTF), and 162–182 (IYVA…LMPL).

Belongs to the ExbB/TolQ family.

The protein localises to the cell membrane. The chain is Putative biopolymer transport protein ExbB homolog from Methanothermobacter thermautotrophicus (strain ATCC 29096 / DSM 1053 / JCM 10044 / NBRC 100330 / Delta H) (Methanobacterium thermoautotrophicum).